The primary structure comprises 323 residues: Acetyl-coenzyme A carboxylase carboxyl transferase subunit alpha (323 aa).

Residues R39–Q293 form the CoA carboxyltransferase C-terminal domain.

The protein belongs to the AccA family. As to quaternary structure, acetyl-CoA carboxylase is a heterohexamer composed of biotin carboxyl carrier protein (AccB), biotin carboxylase (AccC) and two subunits each of ACCase subunit alpha (AccA) and ACCase subunit beta (AccD).

The protein localises to the cytoplasm. It catalyses the reaction N(6)-carboxybiotinyl-L-lysyl-[protein] + acetyl-CoA = N(6)-biotinyl-L-lysyl-[protein] + malonyl-CoA. It functions in the pathway lipid metabolism; malonyl-CoA biosynthesis; malonyl-CoA from acetyl-CoA: step 1/1. In terms of biological role, component of the acetyl coenzyme A carboxylase (ACC) complex. First, biotin carboxylase catalyzes the carboxylation of biotin on its carrier protein (BCCP) and then the CO(2) group is transferred by the carboxyltransferase to acetyl-CoA to form malonyl-CoA. This chain is Acetyl-coenzyme A carboxylase carboxyl transferase subunit alpha, found in Paraburkholderia phymatum (strain DSM 17167 / CIP 108236 / LMG 21445 / STM815) (Burkholderia phymatum).